We begin with the raw amino-acid sequence, 196 residues long: Small ribosomal subunit protein uS4c (196 aa).

Residues 1–14 (MSRYRGPRLKKIRR) show a composition bias toward basic residues. The interval 1–43 (MSRYRGPRLKKIRRLGALPGLTRKTPKSGSNPKKKFHSGKKEQ) is disordered. Positions 89–169 (MRLDNILFRL…LPKHLTIDTL (81 aa)) constitute an S4 RNA-binding domain.

Belongs to the universal ribosomal protein uS4 family. As to quaternary structure, part of the 30S ribosomal subunit. Contacts protein S5. The interaction surface between S4 and S5 is involved in control of translational fidelity.

The protein localises to the plastid. The protein resides in the chloroplast. Functionally, one of the primary rRNA binding proteins, it binds directly to 16S rRNA where it nucleates assembly of the body of the 30S subunit. Its function is as follows. With S5 and S12 plays an important role in translational accuracy. The sequence is that of Small ribosomal subunit protein uS4c (rps4) from Melica uniflora (Wood melick grass).